Consider the following 141-residue polypeptide: Hemoglobin subunit alpha (141 aa).

The 141-residue stretch at 1 to 141 (VLSPADKTNV…VSTVLTSKYR (141 aa)) folds into the Globin domain. Ser3 is subject to Phosphoserine. Residue Lys7 is modified to N6-succinyllysine. The residue at position 8 (Thr8) is a Phosphothreonine. Lys11 is modified (N6-succinyllysine). Position 35 is a phosphoserine (Ser35). Lys40 carries the N6-succinyllysine modification. At Ser49 the chain carries Phosphoserine. His58 provides a ligand contact to O2. His87 contacts heme b. Ser102 bears the Phosphoserine mark. Thr108 is subject to Phosphothreonine. Ser124 carries the post-translational modification Phosphoserine. Phosphothreonine occurs at positions 134 and 137. Residue Ser138 is modified to Phosphoserine.

It belongs to the globin family. In terms of assembly, heterotetramer of two alpha chains and two beta chains. As to expression, red blood cells.

Involved in oxygen transport from the lung to the various peripheral tissues. Its function is as follows. Hemopressin acts as an antagonist peptide of the cannabinoid receptor CNR1. Hemopressin-binding efficiently blocks cannabinoid receptor CNR1 and subsequent signaling. This Eulemur fulvus fulvus (Brown lemur) protein is Hemoglobin subunit alpha (HBA).